Reading from the N-terminus, the 282-residue chain is Bis(5'-nucleosyl)-tetraphosphatase, symmetrical (282 aa).

Belongs to the Ap4A hydrolase family.

It carries out the reaction P(1),P(4)-bis(5'-adenosyl) tetraphosphate + H2O = 2 ADP + 2 H(+). Its function is as follows. Hydrolyzes diadenosine 5',5'''-P1,P4-tetraphosphate to yield ADP. This chain is Bis(5'-nucleosyl)-tetraphosphatase, symmetrical, found in Escherichia coli O81 (strain ED1a).